Reading from the N-terminus, the 500-residue chain is C6 finger domain transcription factor sirZ (500 aa).

The segment at residues 28–54 (CNACHEVKLKCLGGQPCARCRNKQVEC) is a DNA-binding region (zn(2)-C6 fungal-type). A compositionally biased stretch (basic and acidic residues) spans 79–88 (QAKAMSRPEE). 2 disordered regions span residues 79-168 (QAKA…EQIS) and 302-332 (AGSF…GMYQ). The span at 135–147 (GAEEELLDQEERD) shows a compositional bias: acidic residues. Over residues 154–165 (LVENPPNLNPLE) the composition is skewed to low complexity. Positions 304 to 316 (SFSTSGPGSSQEG) are enriched in polar residues. A compositionally biased stretch (low complexity) spans 317-328 (SHFLSSRHSQSS).

Its subcellular location is the nucleus. Functionally, transcription factor that regulates sirodesmin production and contributes to virulence. Probably binds to the consensus motif TCGGN(3)CCGA found in the promoters of sirT, sirP, sirO, sirN, sirP, sirB, sirR, sirJ and sirQ. The protein is C6 finger domain transcription factor sirZ of Leptosphaeria maculans (Blackleg fungus).